The following is a 404-amino-acid chain: Propionate kinase (404 aa).

The protein belongs to the acetokinase family. PduW subfamily.

The protein resides in the cytoplasm. The enzyme catalyses propanoate + ATP = propanoyl phosphate + ADP. It functions in the pathway polyol metabolism; 1,2-propanediol degradation. Works with phosphate acetyltransferase (pta) to capture exogenous propionate and regenerate propionyl-CoA during degradation of 1,2-propanediol (1,2-PD). The chain is Propionate kinase from Klebsiella pneumoniae (strain 342).